The chain runs to 359 residues: Probable dual-specificity RNA methyltransferase RlmN (359 aa).

Residue Glu-91 is the Proton acceptor of the active site. In terms of domain architecture, Radical SAM core spans 97–329 (QHYGHSVCVT…KKNGVNCVVR (233 aa)). Residues Cys-104 and Cys-340 are joined by a disulfide bond. Residues Cys-111, Cys-115, and Cys-118 each contribute to the [4Fe-4S] cluster site. S-adenosyl-L-methionine is bound by residues 163–164 (GE), Ser-195, 218–220 (SLH), and Asn-296. The active-site S-methylcysteine intermediate is Cys-340.

This sequence belongs to the radical SAM superfamily. RlmN family. [4Fe-4S] cluster is required as a cofactor.

Its subcellular location is the cytoplasm. The enzyme catalyses adenosine(2503) in 23S rRNA + 2 reduced [2Fe-2S]-[ferredoxin] + 2 S-adenosyl-L-methionine = 2-methyladenosine(2503) in 23S rRNA + 5'-deoxyadenosine + L-methionine + 2 oxidized [2Fe-2S]-[ferredoxin] + S-adenosyl-L-homocysteine. It catalyses the reaction adenosine(37) in tRNA + 2 reduced [2Fe-2S]-[ferredoxin] + 2 S-adenosyl-L-methionine = 2-methyladenosine(37) in tRNA + 5'-deoxyadenosine + L-methionine + 2 oxidized [2Fe-2S]-[ferredoxin] + S-adenosyl-L-homocysteine. Functionally, specifically methylates position 2 of adenine 2503 in 23S rRNA and position 2 of adenine 37 in tRNAs. The protein is Probable dual-specificity RNA methyltransferase RlmN of Streptococcus pyogenes serotype M5 (strain Manfredo).